The following is a 525-amino-acid chain: Protein nucleotidyltransferase YdiU (525 aa).

G107, G109, R110, K129, D141, G142, R192, and R199 together coordinate ATP. D268 serves as the catalytic Proton acceptor. Residues N269 and D278 each contribute to the Mg(2+) site. Position 278 (D278) interacts with ATP.

Belongs to the SELO family. Mg(2+) serves as cofactor. The cofactor is Mn(2+).

The enzyme catalyses L-seryl-[protein] + ATP = 3-O-(5'-adenylyl)-L-seryl-[protein] + diphosphate. It catalyses the reaction L-threonyl-[protein] + ATP = 3-O-(5'-adenylyl)-L-threonyl-[protein] + diphosphate. It carries out the reaction L-tyrosyl-[protein] + ATP = O-(5'-adenylyl)-L-tyrosyl-[protein] + diphosphate. The catalysed reaction is L-histidyl-[protein] + UTP = N(tele)-(5'-uridylyl)-L-histidyl-[protein] + diphosphate. The enzyme catalyses L-seryl-[protein] + UTP = O-(5'-uridylyl)-L-seryl-[protein] + diphosphate. It catalyses the reaction L-tyrosyl-[protein] + UTP = O-(5'-uridylyl)-L-tyrosyl-[protein] + diphosphate. Its function is as follows. Nucleotidyltransferase involved in the post-translational modification of proteins. It can catalyze the addition of adenosine monophosphate (AMP) or uridine monophosphate (UMP) to a protein, resulting in modifications known as AMPylation and UMPylation. This is Protein nucleotidyltransferase YdiU from Ralstonia nicotianae (strain ATCC BAA-1114 / GMI1000) (Ralstonia solanacearum).